The primary structure comprises 200 residues: Adenine phosphoribosyltransferase (200 aa).

Belongs to the purine/pyrimidine phosphoribosyltransferase family. As to quaternary structure, homodimer.

It is found in the cytoplasm. The enzyme catalyses AMP + diphosphate = 5-phospho-alpha-D-ribose 1-diphosphate + adenine. The protein operates within purine metabolism; AMP biosynthesis via salvage pathway; AMP from adenine: step 1/1. Its function is as follows. Catalyzes a salvage reaction resulting in the formation of AMP, that is energically less costly than de novo synthesis. The protein is Adenine phosphoribosyltransferase of Sorangium cellulosum (strain So ce56) (Polyangium cellulosum (strain So ce56)).